A 655-amino-acid chain; its full sequence is Kelch-like protein 13 (655 aa).

The BTB domain occupies Cys92 to Met161. A BACK domain is found at Cys196–Gln297. Kelch repeat units follow at residues His341–Asn389, Phe390–Gly441, Tyr442–Gly488, Met490–Glu535, Leu537–Asn587, and Lys588–Val636.

Component of the BCR(KLHL9-KLHL13) E3 ubiquitin ligase complex, at least composed of CUL3, KLHL9, KLHL13 and RBX1. Interacts with AURKB.

The protein operates within protein modification; protein ubiquitination. Substrate-specific adapter of a BCR (BTB-CUL3-RBX1) E3 ubiquitin-protein ligase complex required for mitotic progression and cytokinesis. The BCR(KLHL9-KLHL13) E3 ubiquitin ligase complex mediates the ubiquitination of AURKB and controls the dynamic behavior of AURKB on mitotic chromosomes and thereby coordinates faithful mitotic progression and completion of cytokinesis. In Homo sapiens (Human), this protein is Kelch-like protein 13 (KLHL13).